The sequence spans 254 residues: Putative hydro-lyase SACE_1553 (254 aa).

It belongs to the D-glutamate cyclase family.

This chain is Putative hydro-lyase SACE_1553, found in Saccharopolyspora erythraea (strain ATCC 11635 / DSM 40517 / JCM 4748 / NBRC 13426 / NCIMB 8594 / NRRL 2338).